Reading from the N-terminus, the 652-residue chain is Acetyl-coenzyme A synthetase (652 aa).

CoA contacts are provided by residues 189 to 192 and Thr311; that span reads RGGK. Residues 387–389, 411–416, Asp500, and Arg515 contribute to the ATP site; these read GEP and DTWWQT. Residue Ser523 coordinates CoA. Arg526 provides a ligand contact to ATP. Mg(2+) is bound by residues Val537, His539, and Val542. Arg584 provides a ligand contact to CoA. Lys609 bears the N6-acetyllysine mark.

Belongs to the ATP-dependent AMP-binding enzyme family. It depends on Mg(2+) as a cofactor. Post-translationally, acetylated. Deacetylation by the SIR2-homolog deacetylase activates the enzyme.

It carries out the reaction acetate + ATP + CoA = acetyl-CoA + AMP + diphosphate. In terms of biological role, catalyzes the conversion of acetate into acetyl-CoA (AcCoA), an essential intermediate at the junction of anabolic and catabolic pathways. AcsA undergoes a two-step reaction. In the first half reaction, AcsA combines acetate with ATP to form acetyl-adenylate (AcAMP) intermediate. In the second half reaction, it can then transfer the acetyl group from AcAMP to the sulfhydryl group of CoA, forming the product AcCoA. The sequence is that of Acetyl-coenzyme A synthetase from Bartonella henselae (strain ATCC 49882 / DSM 28221 / CCUG 30454 / Houston 1) (Rochalimaea henselae).